A 138-amino-acid polypeptide reads, in one-letter code: Small ribosomal subunit protein uS11c (138 aa).

This sequence belongs to the universal ribosomal protein uS11 family. In terms of assembly, part of the 30S ribosomal subunit.

Its subcellular location is the plastid. It is found in the chloroplast. The polypeptide is Small ribosomal subunit protein uS11c (Nandina domestica (Heavenly bamboo)).